A 480-amino-acid polypeptide reads, in one-letter code: Probable ATP-dependent RNA helicase DDX49 (480 aa).

The Q motif signature appears at 2-30; it reads AGFAEIGLSSWLVEQCRQLGLKQPTPVQL. In terms of domain architecture, Helicase ATP-binding spans 33–207; that stretch reads IPAILEGRDC…GLATNEPFFW (175 aa). 46 to 53 lines the ATP pocket; the sequence is AKTGSGKT. The DEAD box motif lies at 152 to 155; the sequence is DEAD. In terms of domain architecture, Helicase C-terminal spans 218 to 382; that stretch reads QLDQRYLLVP…ELVVEEAEVL (165 aa). A disordered region spans residues 438-480; that stretch reads QQNRRFKEKVGQTLRRQKAGSTVRRSRPPRSRPQEPAQAEAQD.

It belongs to the DEAD box helicase family. DDX49/DBP8 subfamily.

The protein resides in the nucleus. The protein localises to the nucleolus. It catalyses the reaction ATP + H2O = ADP + phosphate + H(+). Functionally, ATP-dependent RNA helicase that plays a role in various aspects of RNA metabolism including the regulation of mRNA export and the levels of pre-ribosomal RNA. Regulates the stability and synthesis of pre-ribosomal RNA and thereby regulates cell proliferation. Also possesses antiviral activity by recognizing gammaherpesvirus transcripts in the context of lytic reactivation. The protein is Probable ATP-dependent RNA helicase DDX49 (Ddx49) of Mus musculus (Mouse).